A 364-amino-acid chain; its full sequence is MKPSVIEILQKLLTYPSITPKECGIFDYVRSLLEGFEAIEVEHEGVKNLLLYRCFGEGEHWCLAGHIDVVPPGEGWSVDPFGAELKEGYLYGRGAQDMKSGVAAMISALAKIDHFPGTLSLLLTSDEEGEAKWGTQLMLEHLKERGFLPKVAIVTEPTSEERFGDTIKVGRRGSINGKLIIHGKQGHVAYPSKCLNPVELIAPRLAQIAGYNLDAGDEFFEPSKLVITDIRGGIEAVNVTPSDLKILFNVRHSTQTSAKEIEDYLHQLLQGIPYTLEIKPSSKPFLTSRESVVVKRVSEAVKRVMGVAPKLSTGGGTSDARYFAQFGVEVVECGVVNDRIHALDERVALLEVEALERVLLEALG.

Residue H66 coordinates Zn(2+). D68 is an active-site residue. Residue D97 participates in Zn(2+) binding. E127 serves as the catalytic Proton acceptor. 3 residues coordinate Zn(2+): E128, E156, and H341.

It belongs to the peptidase M20A family. DapE subfamily. In terms of assembly, homodimer. The cofactor is Zn(2+). Co(2+) is required as a cofactor.

It catalyses the reaction N-succinyl-(2S,6S)-2,6-diaminopimelate + H2O = (2S,6S)-2,6-diaminopimelate + succinate. The protein operates within amino-acid biosynthesis; L-lysine biosynthesis via DAP pathway; LL-2,6-diaminopimelate from (S)-tetrahydrodipicolinate (succinylase route): step 3/3. In terms of biological role, catalyzes the hydrolysis of N-succinyl-L,L-diaminopimelic acid (SDAP), forming succinate and LL-2,6-diaminopimelate (DAP), an intermediate involved in the bacterial biosynthesis of lysine and meso-diaminopimelic acid, an essential component of bacterial cell walls. This chain is Succinyl-diaminopimelate desuccinylase, found in Wolinella succinogenes (strain ATCC 29543 / DSM 1740 / CCUG 13145 / JCM 31913 / LMG 7466 / NCTC 11488 / FDC 602W) (Vibrio succinogenes).